Consider the following 231-residue polypeptide: Allergen Ani s 10 (231 aa).

A signal peptide spans 1 to 19 (MHLITALVLLLQLIHFITS). 7 repeat units span residues 28–56 (GGPGPVVGGSGIGNVWEKANEQAAEQQNI), 57–85 (GGPGPVISGSGIGDVWNKANEPAEQQENI), 86–114 (GGPGPVVSGSGIGNVWEKANEQAAHQQSI), 115–143 (EGPGPVVSGSGIGNVWEKANEQAAHQQSI), 144–172 (EGPGPVVSGSGIGDVWNKANEQAAEQQNI), 173–201 (GGPGPVISGSGIGNVWEKANEQAAEQQNI), and 204–231 (GGPGPVKSGSGIGNVWEETNEEAASMQA). A 6 X 29 AA tandem repeats of [EG]-G-P-G-P-V-[IV]-[SG]-G-S-G-I-G-[ND]-V-W-[NE]-K-A-N-E-[QP]-A-[AE]-[QEH]-Q-[EQ]-[NS]-I region spans residues 28-201 (GGPGPVVGGS…NEQAAEQQNI (174 aa)). Disordered regions lie at residues 107-126 (QAAHQQSIEGPGPVVSGSGI) and 134-231 (NEQA…SMQA). Low complexity-rich tracts occupy residues 114–123 (IEGPGPVVSG), 143–152 (IEGPGPVVSG), and 177–187 (PVISGSGIGNV).

This chain is Allergen Ani s 10, found in Anisakis simplex (Herring worm).